Consider the following 405-residue polypeptide: Arrestin red cell isoform 2 (405 aa).

It belongs to the arrestin family.

It is found in the cytoplasm. This is Arrestin red cell isoform 2 from Oncorhynchus mykiss (Rainbow trout).